The chain runs to 126 residues: Large ribosomal subunit protein bL19 (126 aa).

Belongs to the bacterial ribosomal protein bL19 family.

This protein is located at the 30S-50S ribosomal subunit interface and may play a role in the structure and function of the aminoacyl-tRNA binding site. The chain is Large ribosomal subunit protein bL19 from Nitrobacter winogradskyi (strain ATCC 25391 / DSM 10237 / CIP 104748 / NCIMB 11846 / Nb-255).